A 204-amino-acid polypeptide reads, in one-letter code: Pro-hevein (204 aa).

An N-terminal signal peptide occupies residues 1–17; that stretch reads MNIFIVVLLCLTGVAIA. Residues 18–60 form the Chitin-binding type-1 domain; it reads EQCGRQAGGKLCPNNLCCSQWGWCGSTDEYCSPDHNCQSNCKD. 4 disulfides stabilise this stretch: Cys-20–Cys-35, Cys-29–Cys-41, Cys-34–Cys-48, and Cys-54–Cys-58. A propeptide spanning residues 61–66 is cleaved from the precursor; it reads SGEGVG. The region spanning 68 to 189 is the Barwin domain; sequence GSASNVLATY…VNYQFVDCGD (122 aa). 3 disulfide bridges follow: Cys-96–Cys-128, Cys-117–Cys-151, and Cys-131–Cys-187.

Post-translationally, proteolytically processed to yield the two chains of the mature protein. As to expression, laticifer.

In terms of biological role, N-acetyl-D-glucosamine / N-acetyl-D-neuraminic acid binding lectin. Can inhibit fungal growth. The protein is Pro-hevein (HEV1) of Hevea brasiliensis (Para rubber tree).